A 432-amino-acid polypeptide reads, in one-letter code: Adenylosuccinate synthetase (432 aa).

GTP contacts are provided by residues Gly-12–Lys-18 and Gly-40–Thr-42. Residue Asp-13 is the Proton acceptor of the active site. Positions 13 and 40 each coordinate Mg(2+). IMP contacts are provided by residues Asp-13–Lys-16, Asn-38–His-41, Thr-129, Arg-143, Gln-224, Thr-239, and Arg-303. His-41 functions as the Proton donor in the catalytic mechanism. Position 299-305 (Val-299–Arg-305) interacts with substrate. Residues Arg-305, Lys-331–Asp-333, and Gly-413–Gly-415 contribute to the GTP site.

Belongs to the adenylosuccinate synthetase family. In terms of assembly, homodimer. Mg(2+) serves as cofactor.

Its subcellular location is the cytoplasm. It catalyses the reaction IMP + L-aspartate + GTP = N(6)-(1,2-dicarboxyethyl)-AMP + GDP + phosphate + 2 H(+). Its pathway is purine metabolism; AMP biosynthesis via de novo pathway; AMP from IMP: step 1/2. Its function is as follows. Plays an important role in the de novo pathway of purine nucleotide biosynthesis. Catalyzes the first committed step in the biosynthesis of AMP from IMP. The chain is Adenylosuccinate synthetase from Mycobacterium leprae (strain TN).